Consider the following 76-residue polypeptide: Protein OPG128 (76 aa).

Cysteine 17 and cysteine 21 form a disulfide bridge.

It belongs to the orthopoxvirus OPG128 family. In terms of assembly, interacts with sulfhydryl oxidase OPG072; this interaction involves formation of a transient disulfide-bonded intermediate, allowing disulfide bond transfer. Interacts with OPG088; this interaction involves formation of a transient disulfide-bonded intermediate, allowing disulfide bond transfer.

Its function is as follows. Late protein which probably participates in disulfide bond formation by functioning as a thiol-disulfide transfer protein between membrane-associated OPG072 and OPG08. The complete pathway for formation of disulfide bonds in intracellular virion membrane proteins sequentially involves oxidation of OPG072, OPG128 and OPG08. The polypeptide is Protein OPG128 (OPG128) (Homo sapiens (Human)).